The primary structure comprises 1126 residues: MSTAAPAASATNSAIPAQKEFSLPPSTDTVSVPVNRKKQKRRQKQAARLAAERQSNGHISPDAATQNGSSPAADPEGYHSDEFGDVDQEQLSNGDANHKDDQDSVDAHDDYQYPGNGSEGLQKPTGRKSKKKKGKKGPNGTHAPEDETATHASTPSVSMSHPLPPTLPSHLGPRPILKPAKTRSIWNTSTQEERENIKTFWLELGEEERRQLVKVEKDAVLKKMKEQQRHSCSCTVCGRKRTAIEEELEVLYDAYYEELEQYANHNQGSFEKGPPIVPPPRLYQPPLRSPGQHTRTQGQFHPSRGRIHEVPEEEDDDDLEEDYDEDEEDDEPYSDEDSDDEDDEARAARADFFAFGNSLTVKDGILTVADDLLKNDGKHFIDMMEQLAERRMQREEDTQYGIAAAHQSLHSGHNHGPFDEEDYDEEEDEDYDSQEDEDYEEDEMDTMTEEQRMEEGRRMFQIFAARMFEQRVLTAYREKVAEQRQQKLIEELLEEETRNEQRNAKKAREAQKRKDKKKLQKQAKEEERARREAEKAAEEAAAKAEQEKKLEEQRKKREEQRKKKEADRKAQEEERARKEAEKLRRQREERERQAEVERKQREEKKRREEARRKEKEERELREKKAKEEQLQKDAAKAEEAAKEREKREYQAKRTSPFSSNQHPQISSSPVAHSPHIQSGIPVVPKAPTPARPRQPSQQDSHTSSPHSQPASTDPSQASVSPRSMPISQSSGASSVASKHVHGLHAMFHQPQPSAPLSPLGRSIPPGFSAMNGLPPGPPGLTGILGRPPMAHELPVYPPHSGPFIGQFRGYPTPNGIPAAPGINGARAMPPGRGFPLESAHGFPFHGQQQIPGAFSAQQSGLPHGHSRQPSGSFERSPLEGQTQPMPISRPSPIKRPSSTQQDQRKNGDRTAQRDVDDLSAHLGSSALLDDTDVPFASTLSQSLPGATAPGPLPGPARASFGGPSLFPDPLSTSGWSNNAFGSGVHHRAHTSRPVAIRLLVIQACKQLNTMSPFKGADGFHDVSLVLRQVEQLRPQNEPSISLKEMLDICDTEGSTQNGGGSFSTKKDETGEFVKFEPDNNSAASGHRGSIVPGEIGSPVPSSSLPAFGGIGTPSVLRQFSSPPMGF.

Residues 1–17 show a composition bias toward low complexity; it reads MSTAAPAASATNSAIPA. Disordered regions lie at residues 1-192, 266-348, 404-453, 492-774, 823-914, 939-965, and 1075-1126; these read MSTA…STQE, NQGS…ARAA, AAHQ…EQRM, LLEE…NGLP, NGAR…AQRD, LSQS…GPSL, and FEPD…PMGF. Positions 35–45 are enriched in basic residues; that stretch reads NRKKQKRRQKQ. Over residues 96–111 the composition is skewed to basic and acidic residues; that stretch reads ANHKDDQDSVDAHDDY. Residues 125–136 are compositionally biased toward basic residues; it reads TGRKSKKKKGKK. Polar residues predominate over residues 291–300; the sequence is GQHTRTQGQF. Acidic residues-rich tracts occupy residues 311–344 and 419–448; these read PEEE…EDDE and DEED…DTMT. A coiled-coil region spans residues 479 to 655; it reads KVAEQRQQKL…KREYQAKRTS (177 aa). 2 stretches are compositionally biased toward basic and acidic residues: residues 492–512 and 522–651; these read LLEE…EAQK and QAKE…EYQA. Composition is skewed to polar residues over residues 655 to 670 and 694 to 721; these read SPFS…SSPV and QPSQ…SVSP. Over residues 727 to 737 the composition is skewed to low complexity; it reads SQSSGASSVAS. 2 stretches are compositionally biased toward polar residues: residues 846 to 860 and 867 to 885; these read GQQQ…QQSG and RQPS…TQPM. Residues 886–898 are compositionally biased toward low complexity; sequence PISRPSPIKRPSS. The segment covering 902–914 has biased composition (basic and acidic residues); sequence DQRKNGDRTAQRD. A compositionally biased stretch (polar residues) spans 1115–1126; that stretch reads VLRQFSSPPMGF.

It belongs to the NST1 family.

It is found in the cytoplasm. Functionally, may act as a negative regulator of salt tolerance. This Aspergillus clavatus (strain ATCC 1007 / CBS 513.65 / DSM 816 / NCTC 3887 / NRRL 1 / QM 1276 / 107) protein is Stress response protein nst1 (nst1).